A 258-amino-acid polypeptide reads, in one-letter code: Isoprenyl transferase 2 (258 aa).

The active site involves Asp-39. Asp-39 serves as a coordination point for Mg(2+). Residues 40–43, Trp-44, Arg-52, His-57, and 85–87 contribute to the substrate site; these read GNRR and SND. The Proton acceptor role is filled by Asn-88. Substrate contacts are provided by residues Arg-92, Arg-207, and 213 to 215; that span reads RLS. Mg(2+) is bound at residue Glu-226.

Belongs to the UPP synthase family. As to quaternary structure, homodimer. Mg(2+) is required as a cofactor.

In terms of biological role, catalyzes the condensation of isopentenyl diphosphate (IPP) with allylic pyrophosphates generating different type of terpenoids. The protein is Isoprenyl transferase 2 of Tropheryma whipplei (strain Twist) (Whipple's bacillus).